The primary structure comprises 85 residues: UPF0335 protein Plav_2034 (85 aa).

The protein belongs to the UPF0335 family.

The sequence is that of UPF0335 protein Plav_2034 from Parvibaculum lavamentivorans (strain DS-1 / DSM 13023 / NCIMB 13966).